Here is a 1782-residue protein sequence, read N- to C-terminus: Vitellogenin receptor (1782 aa).

Positions M1–V18 are cleaved as a signal peptide. Residues S19 to N1663 lie on the Extracellular side of the membrane. LDL-receptor class A domains are found at residues K35–D72, T81–V118, and N122–K157. 6 disulfide bridges follow: C36/C48, C43/C61, C55/C71, C82/C94, C89/C107, and C101/C117. A glycan (N-linked (GlcNAc...) asparagine) is linked at N122. Cystine bridges form between C123–C134, C129–C147, and C141–C156. A glycan (N-linked (GlcNAc...) asparagine) is linked at N159. Residues S166–T205 enclose the LDL-receptor class A 4 domain. 3 disulfide bridges follow: C167-C181, C176-C194, and C188-C204. Residues N208 and N239 are each glycosylated (N-linked (GlcNAc...) asparagine). The region spanning N208–N243 is the EGF-like 1 domain. The 40-residue stretch at D244–K283 folds into the EGF-like; calcium-binding domain. Cystine bridges form between C248-C258, C254-C267, and C269-C282. 5 LDL-receptor class B repeats span residues D327–T374, K375–Q416, G417–N460, E461–Q501, and N502–A544. An EGF-like 2 domain is found at P552–Q588. N-linked (GlcNAc...) asparagine glycosylation is found at N702, N859, N896, and N923. The EGF-like 3 domain maps to D889–I927. 5 LDL-receptor class A domains span residues E931 to R969, R973 to E1009, K1012 to R1049, E1052 to Y1090, and A1094 to L1131. Disulfide bonds link C932/C945, C939/C958, C952/C968, C974/C986, C981/C999, C993/C1008, C1013/C1026, C1020/C1039, C1033/C1048, C1053/C1065, C1060/C1078, C1072/C1089, C1095/C1108, C1103/C1121, and C1115/C1130. N-linked (GlcNAc...) asparagine glycosylation is found at N1133 and N1140. LDL-receptor class A domains are found at residues N1140 to T1177, Y1178 to D1214, and E1225 to Q1260. 9 cysteine pairs are disulfide-bonded: C1141–C1154, C1148–C1167, C1161–C1176, C1179–C1191, C1186–C1204, C1198–C1213, C1226–C1236, C1231–C1249, and C1243–C1259. N-linked (GlcNAc...) asparagine glycosylation is present at N1175. The region spanning A1262–E1298 is the EGF-like 4 domain. LDL-receptor class B repeat units lie at residues D1385–T1425, R1471–K1518, and S1519–S1561. N-linked (GlcNAc...) asparagine glycans are attached at residues N1626, N1640, and N1656. A helical transmembrane segment spans residues I1664–V1684. The Cytoplasmic portion of the chain corresponds to Y1685–K1782.

As to expression, expressed in ovaries of reproductive females.

It localises to the membrane. In terms of biological role, involved in uptake of vitellogenin by endocytosis. Expression is regulated by the juvenile hormone analog, methoprene (in vitro). The sequence is that of Vitellogenin receptor from Solenopsis invicta (Red imported fire ant).